The following is a 317-amino-acid chain: Nuclear distribution protein nudE homolog (317 aa).

Residues 29–180 (TDVKQEYDEF…LKQELNVKSR (152 aa)) are a coiled coil. Residues 186-205 (NGTSVPTANDTNTVNSSMNS) are disordered.

This sequence belongs to the nudE family.

Its subcellular location is the cytoplasm. It is found in the cytoskeleton. It localises to the microtubule organizing center. The protein resides in the centrosome. The protein localises to the spindle. Chaperone protein with functions in nuclear localization. Required for centrosome duplication and formation and function of the mitotic spindle. In postmitotic neurons, acts with nudC downstream of dar1 to ensure correct positioning of the nuclei in primary dendrites and as a consequence, is required for determining multipolar neuron morphology. The polypeptide is Nuclear distribution protein nudE homolog (Drosophila melanogaster (Fruit fly)).